We begin with the raw amino-acid sequence, 344 residues long: Methionine import ATP-binding protein MetN (344 aa).

Residues 2-241 (IEINRVNKVF…PKTELARKFI (240 aa)) enclose the ABC transporter domain. 38–45 (GSSGAGKS) is an ATP binding site.

Belongs to the ABC transporter superfamily. Methionine importer (TC 3.A.1.24) family. In terms of assembly, the complex is composed of two ATP-binding proteins (MetN), two transmembrane proteins (MetI) and a solute-binding protein (MetQ).

The protein resides in the cell inner membrane. It carries out the reaction L-methionine(out) + ATP + H2O = L-methionine(in) + ADP + phosphate + H(+). It catalyses the reaction D-methionine(out) + ATP + H2O = D-methionine(in) + ADP + phosphate + H(+). In terms of biological role, part of the ABC transporter complex MetNIQ involved in methionine import. Responsible for energy coupling to the transport system. The chain is Methionine import ATP-binding protein MetN from Photobacterium profundum (strain SS9).